Reading from the N-terminus, the 425-residue chain is L-cysteine:1D-myo-inositol 2-amino-2-deoxy-alpha-D-glucopyranoside ligase (425 aa).

Residue cysteine 43 participates in Zn(2+) binding. L-cysteinyl-5'-AMP is bound by residues 43–46 (CGIT), serine 58, and 81–83 (NVT). The 'HIGH' region motif lies at 45–55 (ITPYDATHMGH). A 'ERGGDP' region motif is present at residues 199–204 (ERGGDP). Tryptophan 240 lines the L-cysteinyl-5'-AMP pocket. Position 244 (cysteine 244) interacts with Zn(2+). 262–264 (GSD) provides a ligand contact to L-cysteinyl-5'-AMP. Histidine 269 serves as a coordination point for Zn(2+). Valine 295 lines the L-cysteinyl-5'-AMP pocket. Residues 301-305 (KMSKS) carry the 'KMSKS' region motif.

Belongs to the class-I aminoacyl-tRNA synthetase family. MshC subfamily. In terms of assembly, monomer. Requires Zn(2+) as cofactor.

The enzyme catalyses 1D-myo-inositol 2-amino-2-deoxy-alpha-D-glucopyranoside + L-cysteine + ATP = 1D-myo-inositol 2-(L-cysteinylamino)-2-deoxy-alpha-D-glucopyranoside + AMP + diphosphate + H(+). Catalyzes the ATP-dependent condensation of GlcN-Ins and L-cysteine to form L-Cys-GlcN-Ins. In Paenarthrobacter aurescens (strain TC1), this protein is L-cysteine:1D-myo-inositol 2-amino-2-deoxy-alpha-D-glucopyranoside ligase.